The chain runs to 477 residues: Cysteine protease ATG4b (477 aa).

The tract at residues 11-39 (SKCSSSSTSEKRDISSPTSLVSDSASSDN) is disordered. Positions 25 to 39 (SSPTSLVSDSASSDN) are enriched in polar residues. Cys173 serves as the catalytic Nucleophile. Active-site residues include Asp368 and His370. The segment at 453-477 (AETSSSTETSTEISGEEHEDDWQLL) is disordered. Residues 454-465 (ETSSSTETSTEI) show a composition bias toward low complexity.

It belongs to the peptidase C54 family. As to quaternary structure, interacts with ATG8a and ATG8d. Constitutively expressed.

The protein resides in the cytoplasm. The enzyme catalyses [protein]-C-terminal L-amino acid-glycyl-phosphatidylethanolamide + H2O = [protein]-C-terminal L-amino acid-glycine + a 1,2-diacyl-sn-glycero-3-phosphoethanolamine. Cysteine protease that plays a key role in autophagy by mediating both proteolytic activation and delipidation of ATG8 family proteins. The protease activity is required for proteolytic activation of ATG8 family proteins: cleaves the C-terminal amino acid of ATG8 proteins to reveal a C-terminal glycine. Exposure of the glycine at the C-terminus is essential for ATG8 proteins conjugation to phosphatidylethanolamine (PE) and insertion to membranes, which is necessary for autophagy. In addition to the protease activity, also mediates delipidation of PE-conjugated ATG8 proteins. The protein is Cysteine protease ATG4b of Arabidopsis thaliana (Mouse-ear cress).